A 131-amino-acid chain; its full sequence is POU domain, class 3, transcription factor 3 (131 aa).

The POU-specific domain maps to 1–60 (FTQRRMKLGFTQADVGLALGTLYGNVFSQTTICRFEALQLSFKNMCKLKPLLNKWLEEAD). The segment at residues 78-131 (KRKKRTSIEVSVKGALESHFLKCPKPSAQEITNLADSLQLEKEVVRVWFCNNLQ) is a DNA-binding region (homeobox).

Belongs to the POU transcription factor family. Class-3 subfamily. Homodimer. As to expression, brain.

The protein resides in the nucleus. Its function is as follows. Transcription factor that acts synergistically with SOX11 and SOX4. Plays a role in neuronal development. Is implicated in an enhancer activity at the embryonic met-mesencephalic junction; the enhancer element contains the octamer motif (5'-ATTTGCAT-3'). This is POU domain, class 3, transcription factor 3 (POU3F3) from Sus scrofa (Pig).